A 334-amino-acid polypeptide reads, in one-letter code: Protein-methionine-sulfoxide reductase catalytic subunit MsrP (334 aa).

Positions 1–44 (MKKNQFLKESDVTAESVFFMKRRQVLKALGISAAAFSLPHAAHA) form a signal peptide, tat-type signal. Residues asparagine 88, 91 to 92 (YE), cysteine 146, threonine 181, asparagine 233, arginine 238, and 249 to 251 (GIK) contribute to the Mo-molybdopterin site.

The protein belongs to the MsrP family. As to quaternary structure, heterodimer of a catalytic subunit (MsrP) and a heme-binding subunit (MsrQ). Mo-molybdopterin serves as cofactor. In terms of processing, predicted to be exported by the Tat system. The position of the signal peptide cleavage has not been experimentally proven.

Its subcellular location is the periplasm. The enzyme catalyses L-methionyl-[protein] + a quinone + H2O = L-methionyl-(S)-S-oxide-[protein] + a quinol. The catalysed reaction is L-methionyl-[protein] + a quinone + H2O = L-methionyl-(R)-S-oxide-[protein] + a quinol. In terms of biological role, part of the MsrPQ system that repairs oxidized periplasmic proteins containing methionine sulfoxide residues (Met-O), using respiratory chain electrons. Thus protects these proteins from oxidative-stress damage caused by reactive species of oxygen and chlorine generated by the host defense mechanisms. MsrPQ is essential for the maintenance of envelope integrity under bleach stress, rescuing a wide series of structurally unrelated periplasmic proteins from methionine oxidation, including the primary periplasmic chaperone SurA and the lipoprotein Pal. The catalytic subunit MsrP is non-stereospecific, being able to reduce both (R-) and (S-) diastereoisomers of methionine sulfoxide. The sequence is that of Protein-methionine-sulfoxide reductase catalytic subunit MsrP from Escherichia coli O6:H1 (strain CFT073 / ATCC 700928 / UPEC).